The primary structure comprises 218 residues: Pyridoxine/pyridoxamine 5'-phosphate oxidase (218 aa).

Substrate contacts are provided by residues 14 to 17 (RREY) and lysine 72. Residues 67–72 (RIVLLK), 82–83 (YT), arginine 88, lysine 89, and glutamine 111 each bind FMN. Residues tyrosine 129, arginine 133, and serine 137 each coordinate substrate. FMN-binding positions include 146 to 147 (QS) and tryptophan 191. Residue 197-199 (RLH) coordinates substrate. FMN is bound at residue arginine 201.

The protein belongs to the pyridoxamine 5'-phosphate oxidase family. Homodimer. Requires FMN as cofactor.

The enzyme catalyses pyridoxamine 5'-phosphate + O2 + H2O = pyridoxal 5'-phosphate + H2O2 + NH4(+). The catalysed reaction is pyridoxine 5'-phosphate + O2 = pyridoxal 5'-phosphate + H2O2. The protein operates within cofactor metabolism; pyridoxal 5'-phosphate salvage; pyridoxal 5'-phosphate from pyridoxamine 5'-phosphate: step 1/1. It participates in cofactor metabolism; pyridoxal 5'-phosphate salvage; pyridoxal 5'-phosphate from pyridoxine 5'-phosphate: step 1/1. Functionally, catalyzes the oxidation of either pyridoxine 5'-phosphate (PNP) or pyridoxamine 5'-phosphate (PMP) into pyridoxal 5'-phosphate (PLP). The protein is Pyridoxine/pyridoxamine 5'-phosphate oxidase of Klebsiella pneumoniae subsp. pneumoniae (strain ATCC 700721 / MGH 78578).